Consider the following 351-residue polypeptide: Cytochrome c biogenesis protein CcsA (351 aa).

8 helical membrane passes run 12 to 32, 37 to 57, 68 to 88, 97 to 117, 143 to 163, 259 to 279, 294 to 314, and 320 to 340; these read NISF…AAFP, LSIL…TLLG, ISNL…IHLI, LVGV…ALTL, MMLS…FLII, IIGL…VWAN, WALI…TKGW, and AILA…VNLL.

This sequence belongs to the CcmF/CycK/Ccl1/NrfE/CcsA family. As to quaternary structure, may interact with ccs1.

Its subcellular location is the cellular thylakoid membrane. Required during biogenesis of c-type cytochromes (cytochrome c6 and cytochrome f) at the step of heme attachment. In Trichodesmium erythraeum (strain IMS101), this protein is Cytochrome c biogenesis protein CcsA.